A 159-amino-acid polypeptide reads, in one-letter code: MRCPFCRHDDTQVVDSRVSEDGAAIRRRRRCSACDKRFTTYERVELNLPAVVKKDGSRTEFDRRKIVASMQLALRKRPVAADAIDAAVARIEYQLLATGEREVRSEKLGELVMNELRGLDTIAYVRFASVYRRFEDVSEFADVIEEFRRASPAKTPRKR.

The segment at 3–34 (CPFCRHDDTQVVDSRVSEDGAAIRRRRRCSAC) is a zinc-finger region. One can recognise an ATP-cone domain in the interval 49–139 (PAVVKKDGSR…VYRRFEDVSE (91 aa)).

It belongs to the NrdR family. Zn(2+) is required as a cofactor.

Functionally, negatively regulates transcription of bacterial ribonucleotide reductase nrd genes and operons by binding to NrdR-boxes. The polypeptide is Transcriptional repressor NrdR (Burkholderia cenocepacia (strain HI2424)).